A 432-amino-acid chain; its full sequence is 3-phosphoshikimate 1-carboxyvinyltransferase (432 aa).

K22, S23, and R27 together coordinate 3-phosphoshikimate. Residue K22 participates in phosphoenolpyruvate binding. Phosphoenolpyruvate-binding residues include G96 and R127. Residues S173, S174, Q175, S201, D316, N339, and K343 each contribute to the 3-phosphoshikimate site. Q175 is a binding site for phosphoenolpyruvate. D316 (proton acceptor) is an active-site residue. Residues R347, R391, and K416 each coordinate phosphoenolpyruvate.

The protein belongs to the EPSP synthase family. As to quaternary structure, monomer.

The protein resides in the cytoplasm. It catalyses the reaction 3-phosphoshikimate + phosphoenolpyruvate = 5-O-(1-carboxyvinyl)-3-phosphoshikimate + phosphate. It participates in metabolic intermediate biosynthesis; chorismate biosynthesis; chorismate from D-erythrose 4-phosphate and phosphoenolpyruvate: step 6/7. Catalyzes the transfer of the enolpyruvyl moiety of phosphoenolpyruvate (PEP) to the 5-hydroxyl of shikimate-3-phosphate (S3P) to produce enolpyruvyl shikimate-3-phosphate and inorganic phosphate. The protein is 3-phosphoshikimate 1-carboxyvinyltransferase of Histophilus somni (Haemophilus somnus).